A 238-amino-acid polypeptide reads, in one-letter code: uncharacterized protein (238 aa).

A run of 7 helical transmembrane segments spans residues 15 to 37, 50 to 69, 79 to 96, 101 to 118, 128 to 150, 163 to 183, and 203 to 225; these read FGALHFAIASVAVLLSALFVLLP, ARAGVAILFLRLGLMLCGTL, LPFHLCPAALISGSLYFI, IFFNLLYFWHFGSFVAVL, ILYAYLFMLTHCLEPAMVVFSLL, CAVLGFLLLAANALFWNRRLG, and FFVYQLLFVSALCLLMLVLYLPF.

The protein resides in the cell membrane. This is an uncharacterized protein from Treponema pallidum (strain Nichols).